The following is a 178-amino-acid chain: Large ribosomal subunit protein uL6 (178 aa).

Belongs to the universal ribosomal protein uL6 family. Part of the 50S ribosomal subunit.

Functionally, this protein binds to the 23S rRNA, and is important in its secondary structure. It is located near the subunit interface in the base of the L7/L12 stalk, and near the tRNA binding site of the peptidyltransferase center. The sequence is that of Large ribosomal subunit protein uL6 from Exiguobacterium sibiricum (strain DSM 17290 / CCUG 55495 / CIP 109462 / JCM 13490 / 255-15).